The primary structure comprises 537 residues: Nucleolar GTP-binding protein 2 (537 aa).

A disordered region spans residues 1–24; sequence MGTYKKEKSRIGREGANEKKPGNL. Ser-186 carries the phosphoserine modification. The region spanning 207 to 368 is the CP-type G domain; that stretch reads WNELYKVIDS…LIDCPGIVPP (162 aa). GTP-binding positions include 317–324 and 361–365; these read GFPNAGKS and DCPGI. A compositionally biased stretch (polar residues) spans 468–486; it reads SSNDEINSSQKVATQQTEG. The interval 468–537 is disordered; sequence SSNDEINSSQ…SAVDDNKNRS (70 aa). Residue Thr-484 is modified to Phosphothreonine. Ser-487 is modified (phosphoserine). The segment covering 487–496 has biased composition (acidic residues); it reads SDQDGEEAEE. The span at 497–512 shows a compositional bias: basic and acidic residues; it reads EWHGISDDGKADESES.

Belongs to the TRAFAC class YlqF/YawG GTPase family. NOG2 subfamily.

The protein resides in the nucleus. It is found in the nucleolus. In terms of biological role, GTPase that associates with pre-60S ribosomal subunits in the nucleolus and is required for their nuclear export and maturation. The sequence is that of Nucleolar GTP-binding protein 2 (nog2) from Schizosaccharomyces pombe (strain 972 / ATCC 24843) (Fission yeast).